The primary structure comprises 255 residues: Ribosomal RNA large subunit methyltransferase E (255 aa).

The S-adenosyl-L-methionine site is built by Gly50, Trp52, Asp68, Asp84, and Asp108. Lys148 functions as the Proton acceptor in the catalytic mechanism. The TRAM domain occupies 195 to 253 (PVRSGEIYDVTVDSVGRTGDGIAMIQGFAVIVKNASPGERLRIKIGPVKQRFAFASILE).

Belongs to the class I-like SAM-binding methyltransferase superfamily. RNA methyltransferase RlmE family.

Its subcellular location is the cytoplasm. The catalysed reaction is uridine(2552) in 23S rRNA + S-adenosyl-L-methionine = 2'-O-methyluridine(2552) in 23S rRNA + S-adenosyl-L-homocysteine + H(+). Its function is as follows. Specifically methylates the uridine in position 2552 of 23S rRNA at the 2'-O position of the ribose in the fully assembled 50S ribosomal subunit. The polypeptide is Ribosomal RNA large subunit methyltransferase E (Methanothrix thermoacetophila (strain DSM 6194 / JCM 14653 / NBRC 101360 / PT) (Methanosaeta thermophila)).